A 68-amino-acid polypeptide reads, in one-letter code: Lividin-1 (68 aa).

Positions 1 to 22 (MFTLKKSLLLLFFLGTINLSLC) are cleaved as a signal peptide. A propeptide spanning residues 23–42 (QEERNADEEERRDERNVEVE) is cleaved from the precursor. Cys-62 and Cys-68 are oxidised to a cystine.

As to expression, expressed by the skin glands.

It localises to the secreted. Functionally, antimicrobial peptide. This is Lividin-1 from Odorrana livida (Green mountain frog).